The chain runs to 514 residues: uncharacterized protein (514 aa).

This is an uncharacterized protein from Caenorhabditis elegans.